We begin with the raw amino-acid sequence, 281 residues long: Release factor glutamine methyltransferase (281 aa).

Residues Glu142 and Asn184 each contribute to the S-adenosyl-L-methionine site. 184–187 contributes to the substrate binding site; sequence NPPY. Positions 261 to 281 are disordered; that stretch reads AADHPDLNNRPRFATARKALP.

The protein belongs to the protein N5-glutamine methyltransferase family. PrmC subfamily.

It carries out the reaction L-glutaminyl-[peptide chain release factor] + S-adenosyl-L-methionine = N(5)-methyl-L-glutaminyl-[peptide chain release factor] + S-adenosyl-L-homocysteine + H(+). Functionally, methylates the class 1 translation termination release factors RF1/PrfA and RF2/PrfB on the glutamine residue of the universally conserved GGQ motif. This is Release factor glutamine methyltransferase from Streptomyces coelicolor (strain ATCC BAA-471 / A3(2) / M145).